A 58-amino-acid polypeptide reads, in one-letter code: Small ribosomal subunit protein bS21 (58 aa).

The interval 27–58 (GTLQELRKREHYEKPSVKRKRKSEAARKRKKY) is disordered. Positions 31 to 42 (ELRKREHYEKPS) are enriched in basic and acidic residues. Residues 43–58 (VKRKRKSEAARKRKKY) show a composition bias toward basic residues.

The protein belongs to the bacterial ribosomal protein bS21 family.

The chain is Small ribosomal subunit protein bS21 (rpsU) from Lactococcus lactis subsp. lactis (strain IL1403) (Streptococcus lactis).